The chain runs to 255 residues: MEIIPAIDLLDGACVRLHQGDYDQVTRFSEDPVAQALSWQSQGATRLHLVDLDGAKRGEPINDAAVRAITAALDIPVQLGGGVRSLERAEELISCGLDRVILGTVAIEQPELVQELAQRHPGRIVVGIDANDGRVATRGWIEQSDVLATDLAKQFSAAGIAAIITTDIATDGTLAGPNLEALRTMAQCSAVPVIASGGIGCMADLLSLLPLEPLGVTGVIVGRALYDGRVDLAEAIAALGEARLQDVTAVAADIA.

Residue aspartate 8 is the Proton acceptor of the active site. Catalysis depends on aspartate 129, which acts as the Proton donor.

It belongs to the HisA/HisF family.

The protein resides in the cytoplasm. It carries out the reaction 1-(5-phospho-beta-D-ribosyl)-5-[(5-phospho-beta-D-ribosylamino)methylideneamino]imidazole-4-carboxamide = 5-[(5-phospho-1-deoxy-D-ribulos-1-ylimino)methylamino]-1-(5-phospho-beta-D-ribosyl)imidazole-4-carboxamide. The protein operates within amino-acid biosynthesis; L-histidine biosynthesis; L-histidine from 5-phospho-alpha-D-ribose 1-diphosphate: step 4/9. The polypeptide is 1-(5-phosphoribosyl)-5-[(5-phosphoribosylamino)methylideneamino] imidazole-4-carboxamide isomerase (Synechococcus sp. (strain CC9605)).